The sequence spans 218 residues: Adenylate kinase (218 aa).

10 to 15 serves as a coordination point for ATP; sequence GAGKGT. The NMP stretch occupies residues 30–59; the sequence is STGDMLRAAVKEGSELGLKVKEIMNSGGLV. AMP is bound by residues threonine 31, arginine 36, 57-59, 85-88, and glutamine 92; these read GLV and GFPR. Positions 122 to 159 are LID; it reads GRRVHPGSGRVYHVDYNPPKEEGKDDVTGEALIQRDDD. ATP contacts are provided by residues arginine 123 and 132–133; that span reads VY. The AMP site is built by arginine 156 and arginine 167. Position 203 (glycine 203) interacts with ATP.

Belongs to the adenylate kinase family. As to quaternary structure, monomer.

Its subcellular location is the cytoplasm. It catalyses the reaction AMP + ATP = 2 ADP. It participates in purine metabolism; AMP biosynthesis via salvage pathway; AMP from ADP: step 1/1. Functionally, catalyzes the reversible transfer of the terminal phosphate group between ATP and AMP. Plays an important role in cellular energy homeostasis and in adenine nucleotide metabolism. This chain is Adenylate kinase, found in Chromohalobacter salexigens (strain ATCC BAA-138 / DSM 3043 / CIP 106854 / NCIMB 13768 / 1H11).